A 149-amino-acid chain; its full sequence is Calmodulin-2 (149 aa).

Ala2 is modified (N-acetylalanine). EF-hand domains follow at residues 8–43 (EQIAEFKEAFSLFDKDGNGNITTKELGTVMRSLGQN), 44–79 (PTEGELQDMINEVDADGNGTIDFPEFLTMMARKMKD), 81–116 (DSEEEIREAFKVFDKDGNGFISAAELRHVMTNPGEK), and 117–149 (LTDEEVDEMIREADIDGDGQVNYEEFVKMMTSK). Residues Asp21, Asp23, Asn25, Asn27, Glu32, Asp57, Asp59, Asn61, Thr63, Glu68, Asp94, Asp96, Asn98, and Glu105 each contribute to the Ca(2+) site. Lys116 bears the N6,N6,N6-trimethyllysine mark. Ca(2+)-binding residues include Asp130, Asp132, Asp134, Gln136, and Glu141.

This sequence belongs to the calmodulin family.

Calmodulin mediates the control of a large number of enzymes, ion channels and other proteins by Ca(2+). Among the enzymes to be stimulated by the calmodulin-Ca(2+) complex are a number of protein kinases and phosphatases. The sequence is that of Calmodulin-2 (CAM2) from Branchiostoma floridae (Florida lancelet).